Reading from the N-terminus, the 489-residue chain is Probable cytochrome P450 522A1 (489 aa).

A helical membrane pass occupies residues methionine 1–asparagine 21. A heme-binding site is contributed by cysteine 433.

Belongs to the cytochrome P450 family. The cofactor is heme.

It is found in the membrane. This Dictyostelium discoideum (Social amoeba) protein is Probable cytochrome P450 522A1 (cyp522A1).